A 913-amino-acid polypeptide reads, in one-letter code: Chitin synthase 1 (913 aa).

Residues 1–27 (MSGAPPPSSGFAPRSYGQQPLSHAPRS) are disordered. The UDP-N-acetyl-alpha-D-glucosamine site is built by Thr-237, Glu-241, and Asp-291. Asn-420 carries an N-linked (GlcNAc...) asparagine glycan. The active site involves Asp-496. Asn-510 is a glycosylation site (N-linked (GlcNAc...) asparagine). 6 consecutive transmembrane segments (helical) span residues 539–559 (WLNGAFFATLFSIWNWGRIYS), 581–601 (YTAFGFFLPANLYLALFFIVF), 625–645 (AVYIYNFSYLFGLLMLIIIGL), 658–678 (FVGAVFGLMMMLSSLVGAGIF), 684–704 (TVHSIVVSILTVGVYFIASAL), and 711–731 (IFMTFTHYTALIPSFVNIFTI). The Conserved SWG motif motif lies at 741-743 (SWG). The next 2 membrane-spanning stretches (helical) occupy residues 800–820 (VLLTWAFSNLIFALFVVYFAS) and 825–845 (MPVLYIFVASLNTCRLLGSIG). N-linked (GlcNAc...) asparagine glycans are attached at residues Asn-867 and Asn-900.

Belongs to the chitin synthase family. Class II subfamily. As to quaternary structure, homodimer. Requires Mn(2+) as cofactor.

It localises to the cell membrane. The catalysed reaction is [(1-&gt;4)-N-acetyl-beta-D-glucosaminyl](n) + UDP-N-acetyl-alpha-D-glucosamine = [(1-&gt;4)-N-acetyl-beta-D-glucosaminyl](n+1) + UDP + H(+). The activity is inhibited by nikkomycin Z (NikZ). In terms of biological role, polymerizes chitin, a structural polymer of the cell wall and septum, by transferring the sugar moiety of UDP-GlcNAc to the non-reducing end of the growing chitin polymer. Involved in mycelial growth, sporangial production, zoospore release and pathogenesis. In Phytophthora sojae (strain P6497) (Soybean stem and root rot agent), this protein is Chitin synthase 1.